The primary structure comprises 321 residues: Serine/threonine-protein phosphatase PP1 (321 aa).

Residues Asp-60, His-62, Asp-88, and Asn-120 each coordinate Mn(2+). Catalysis depends on His-121, which acts as the Proton donor. Mn(2+)-binding residues include His-169 and His-244. The tract at residues 298-321 (KKLTNDSNGRPLTPPRNKQQKPKK) is disordered.

This sequence belongs to the PPP phosphatase family. Interacts with dpiA. It depends on Mn(2+) as a cofactor.

The catalysed reaction is O-phospho-L-seryl-[protein] + H2O = L-seryl-[protein] + phosphate. It catalyses the reaction O-phospho-L-threonyl-[protein] + H2O = L-threonyl-[protein] + phosphate. Its activity is regulated as follows. Inhibited by okadaic acid, tautomycin and calyculin A. Inhibited by phosphatase inhibitor 2 (dpiA). Functionally, protein phosphatase activity in vitro. In Dictyostelium discoideum (Social amoeba), this protein is Serine/threonine-protein phosphatase PP1 (pppB).